The following is a 318-amino-acid chain: tRNA-cytidine(32) 2-sulfurtransferase (318 aa).

A PP-loop motif motif is present at residues 52 to 57 (SGGKDS). 3 residues coordinate [4Fe-4S] cluster: Cys-127, Cys-130, and Cys-218.

This sequence belongs to the TtcA family. As to quaternary structure, homodimer. The cofactor is Mg(2+). Requires [4Fe-4S] cluster as cofactor.

It localises to the cytoplasm. It carries out the reaction cytidine(32) in tRNA + S-sulfanyl-L-cysteinyl-[cysteine desulfurase] + AH2 + ATP = 2-thiocytidine(32) in tRNA + L-cysteinyl-[cysteine desulfurase] + A + AMP + diphosphate + H(+). It participates in tRNA modification. In terms of biological role, catalyzes the ATP-dependent 2-thiolation of cytidine in position 32 of tRNA, to form 2-thiocytidine (s(2)C32). The sulfur atoms are provided by the cysteine/cysteine desulfurase (IscS) system. The protein is tRNA-cytidine(32) 2-sulfurtransferase of Actinobacillus pleuropneumoniae serotype 3 (strain JL03).